A 118-amino-acid polypeptide reads, in one-letter code: Ig heavy chain V region AC38 205.12 (118 aa).

Positions 1–98 are v segment; sequence EVQLQQSGPE…EDSAVYYCAR (98 aa). A disulfide bridge links cysteine 22 with cysteine 96. The tract at residues 99–104 is d segment; it reads GYGYDP. The tract at residues 105 to 118 is j segment; sequence FDVWGTGTTVTVSS.

This Mus musculus (Mouse) protein is Ig heavy chain V region AC38 205.12.